The sequence spans 210 residues: MNILLSSTLFVLLMFQIIGSGMGCDMKVRGLDANMKKMILDLHNKKRQIVANGQQSGQPLAANMKELHWDDEIEAIAQRSAETCVFKHTAKSLRKSSKYSYLGENVYKGGYPDPIPRSVNKWYDEVKDVTPAVVKSFSDDGPMIGHYTQMVWANTEALGCGLVTASDGTSYLFCQYGPGGNYPGQQIYKQGPPGSGCKNGKSSKYPGLCN.

A signal peptide spans methionine 1 to glycine 23.

Contains 3 disulfide bonds. As to expression, expressed by the venom gland.

It localises to the secreted. In Scolopendra dehaani (Thai centipede), this protein is Scoloptoxin SSD552.